The primary structure comprises 388 residues: uncharacterized protein (388 aa).

This is an uncharacterized protein from Ictaluridae (bullhead catfishes).